The sequence spans 165 residues: S-(2-succino)cysteine N-acetyltransferase (165 aa).

Residues 3-162 enclose the N-acetyltransferase domain; the sequence is PRYRLAVERD…ITVYMKKQLR (160 aa).

The protein belongs to the acetyltransferase family.

It carries out the reaction S-(2-succino)-L-cysteine + acetyl-CoA = N-acetyl-S-(2-succino)-L-cysteine + CoA + H(+). It participates in amino-acid biosynthesis; L-cysteine biosynthesis. Its function is as follows. Catalyzes the N-acetylation of S-(2-succino)cysteine. Is involved in a S-(2-succino)cysteine (2SC) degradation pathway that allows B.subtilis to grow on 2SC as a sole sulfur source, via its metabolization to cysteine. Moreover, 2SC is a toxic compound in B.subtilis at high exogenous concentrations, and this enzyme relieves 2SC toxicity via N-acetylation. In Bacillus subtilis (strain 168), this protein is S-(2-succino)cysteine N-acetyltransferase.